A 425-amino-acid polypeptide reads, in one-letter code: UPF0229 protein ETA_15540 (425 aa).

The tract at residues 60–111 is disordered; that stretch reads NEPSFHQGRGGERYRVHPGNDHFVQNDRVDRPQGGGAGGSGQGNAGKDGEGQ. The span at 68 to 90 shows a compositional bias: basic and acidic residues; it reads RGGERYRVHPGNDHFVQNDRVDR. Positions 92–105 are enriched in gly residues; that stretch reads QGGGAGGSGQGNAG.

The protein belongs to the UPF0229 family.

The sequence is that of UPF0229 protein ETA_15540 from Erwinia tasmaniensis (strain DSM 17950 / CFBP 7177 / CIP 109463 / NCPPB 4357 / Et1/99).